A 105-amino-acid chain; its full sequence is Large ribosomal subunit protein eL36 (105 aa).

N6-acetyllysine is present on lysine 62.

It belongs to the eukaryotic ribosomal protein eL36 family. In terms of assembly, component of the large ribosomal subunit.

Its subcellular location is the cytoplasm. The protein resides in the cytosol. Component of the large ribosomal subunit. The ribosome is a large ribonucleoprotein complex responsible for the synthesis of proteins in the cell. This is Large ribosomal subunit protein eL36 (RPL36) from Homo sapiens (Human).